Here is a 619-residue protein sequence, read N- to C-terminus: Interferon-activable protein 204 (619 aa).

Residues 1–88 (MVNEYKRIVL…AEILKKERSE (88 aa)) enclose the Pyrin domain. Positions 24 to 35 (LFKSLLARDLNL) match the Nuclear export signal motif. Residues 86-99 (RSEVTGETSLEKNG) are compositionally biased toward basic and acidic residues. Residues 86–223 (RSEVTGETSL…QNQNIPRGAV (138 aa)) are disordered. Over residues 122–153 (TSATQEETSTAQAGTSTAQARTSTAQAGTSTA) the composition is skewed to low complexity. A run of 3 repeats spans residues 134 to 140 (AGTSTAQ), 141 to 147 (ARTSTAQ), and 148 to 154 (AGTSTAQ). A 3 X 7 AA tandem repeats of A-[GR]-T-S-T-A-Q region spans residues 134–154 (AGTSTAQARTSTAQAGTSTAQ). Positions 150 to 157 (TSTAQKRK) match the Nuclear localization signal motif. A compositionally biased stretch (basic and acidic residues) spans 159–176 (MREEETGVKKSKAAKEPD). Residues 190–206 (SPILHSSSSASSNIPSA) are compositionally biased toward low complexity. Positions 207–218 (KNQKSQPQNQNI) are enriched in polar residues. 2 consecutive HIN-200 domains span residues 213 to 413 (PQNQ…IKIS) and 417 to 615 (NVPK…MQVI). The interaction with ID2 stretch occupies residues 550–614 (KKTERNKFIY…RSVRHSYMQV (65 aa)).

Belongs to the HIN-200 family. Interacts with UBTF. Interacts with RUNX2. Interacts with ID1, ID2 and ID3. Interacts with STING. In terms of processing, acetylated upon bacterial infection, leading to translocation from nucleus to cytoplasm and subsequent recruitment of STING to activate IFN-beta production. As to expression, present in osteoblasts (at protein level).

The protein resides in the nucleus. It is found in the nucleolus. It localises to the cytoplasm. Functionally, interferon-stimulated protein that plays a role in several biological processes including cell differentiation, autophagy and innate immunity. Cooperates with CGAS to sense dsDNA and activates the STING-dependent type I IFN pathway. Mechanistically, gets acetylated upon bacterial infection and then translocates from nucleus into cytoplasm to recruit STING for activation of TBK1-dependent IRF3 nuclear translocation and IFN-beta release. Inhibits the transcription of ribosomal RNA. May inhibit DNA binding by UBTF. Inhibits cell growth via p53/TP53 and RB1-dependent and independent pathways. Acts as a coactivator of RUNX2 during osteogenesis. May be involved in macrophage differentiation. Enables skeletal muscle and cardiac myocyte differentiation by sequestring Id proteins in the cytosol and promoting their ubiquitination and subsequent degradation. This Mus musculus (Mouse) protein is Interferon-activable protein 204 (Ifi204).